We begin with the raw amino-acid sequence, 429 residues long: Ribosomal RNA small subunit methyltransferase B (429 aa).

Residues 254–260 (CAAPGGK), D277, D303, and D322 each bind S-adenosyl-L-methionine. Catalysis depends on C375, which acts as the Nucleophile.

It belongs to the class I-like SAM-binding methyltransferase superfamily. RsmB/NOP family.

The protein resides in the cytoplasm. The catalysed reaction is cytidine(967) in 16S rRNA + S-adenosyl-L-methionine = 5-methylcytidine(967) in 16S rRNA + S-adenosyl-L-homocysteine + H(+). Specifically methylates the cytosine at position 967 (m5C967) of 16S rRNA. This Escherichia fergusonii (strain ATCC 35469 / DSM 13698 / CCUG 18766 / IAM 14443 / JCM 21226 / LMG 7866 / NBRC 102419 / NCTC 12128 / CDC 0568-73) protein is Ribosomal RNA small subunit methyltransferase B.